A 1048-amino-acid polypeptide reads, in one-letter code: Nonsense-mediated mRNA decay protein 5 (1048 aa).

The Importin N-terminal domain maps to 24 to 104 (AETHLKNASK…KDMLIKTMVS (81 aa)). A Phosphoserine modification is found at serine 977.

As to quaternary structure, GTP-bound Ran dissociates the isolated NMD5/TFIIS complex.

It is found in the nucleus. The protein localises to the cytoplasm. Functionally, active in protein import into the nucleus. Its major import substrate is transcription elongation factor TFIIS. The sequence is that of Nonsense-mediated mRNA decay protein 5 (NMD5) from Saccharomyces cerevisiae (strain ATCC 204508 / S288c) (Baker's yeast).